The following is a 166-amino-acid chain: Small ribosomal subunit protein uS5 (166 aa).

Residues 11-74 (LQEKLIAVNR…EKARRNMINV (64 aa)) enclose the S5 DRBM domain.

The protein belongs to the universal ribosomal protein uS5 family. Part of the 30S ribosomal subunit. Contacts proteins S4 and S8.

Functionally, with S4 and S12 plays an important role in translational accuracy. In terms of biological role, located at the back of the 30S subunit body where it stabilizes the conformation of the head with respect to the body. The sequence is that of Small ribosomal subunit protein uS5 from Pasteurella multocida (strain Pm70).